The sequence spans 398 residues: 2-amino-3-ketobutyrate coenzyme A ligase (398 aa).

A pyridoxal 5'-phosphate-binding site is contributed by 111-112 (CF). Histidine 136 contributes to the substrate binding site. Pyridoxal 5'-phosphate-binding positions include serine 185, 210-213 (DDSH), 241-244 (TLGK), and 274-275 (SN). Lysine 244 carries the post-translational modification N6-(pyridoxal phosphate)lysine. Residue arginine 368 participates in substrate binding.

This sequence belongs to the class-II pyridoxal-phosphate-dependent aminotransferase family. In terms of assembly, homodimer. Pyridoxal 5'-phosphate serves as cofactor.

It carries out the reaction glycine + acetyl-CoA = (2S)-2-amino-3-oxobutanoate + CoA. It participates in amino-acid degradation; L-threonine degradation via oxydo-reductase pathway; glycine from L-threonine: step 2/2. In terms of biological role, catalyzes the cleavage of 2-amino-3-ketobutyrate to glycine and acetyl-CoA. The sequence is that of 2-amino-3-ketobutyrate coenzyme A ligase from Salmonella typhimurium (strain LT2 / SGSC1412 / ATCC 700720).